The primary structure comprises 606 residues: Putative amino acid transporter AAT1 (606 aa).

The interval 1 to 156 is disordered; that stretch reads MNKKYGTSSN…DEEGTNKPKR (156 aa). Basic and acidic residues-rich tracts occupy residues 12–25 and 72–89; these read HDNKKDKKNNADKN and SDKKNEKSDKNEKNESSK. Residues 140–149 show a composition bias toward acidic residues; sequence SDGDYTNDEE. 11 helical membrane-spanning segments follow: residues 175-194, 200-225, 246-271, 283-301, 313-332, 352-372, 393-412, 428-449, 522-539, 545-567, and 579-605; these read TVLFICTAIGVGFLSIPYVF, ILSIILIILNAFESYVTTNILCTSSL, TIIDFGLSFGFVSSYILILILISNFL, LFTNNVFLVILICLLILPI, FLIFSLFSLSITVLTIGLQT, HFFKCFNILLFSFSQQPNACF, VILQVIFYTLFGILGYFSFL, VSILLCKFLLSLTFFFSVPLNF, MWISVIVTIFCALIACKV, VIGIGGGITSTLISCLLPNLIYY, and RYSTLFMLCFFSFMGFLSVVVTTLNLI.

Belongs to the amino acid/polyamine transporter 2 family.

It is found in the vacuole membrane. Functionally, putative amino acid transporter. Probably transports tryptophan. Involved in maintaining the osmotic homeostasis of the digestive vacuole. Important for the timely development and growth of the asexual-stage parasites and male gametocyte maturation. The polypeptide is Putative amino acid transporter AAT1 (Plasmodium falciparum (isolate 3D7)).